A 129-amino-acid polypeptide reads, in one-letter code: Large ribosomal subunit protein uL22 (129 aa).

Belongs to the universal ribosomal protein uL22 family. As to quaternary structure, part of the 50S ribosomal subunit.

This protein binds specifically to 23S rRNA; its binding is stimulated by other ribosomal proteins, e.g. L4, L17, and L20. It is important during the early stages of 50S assembly. It makes multiple contacts with different domains of the 23S rRNA in the assembled 50S subunit and ribosome. In terms of biological role, the globular domain of the protein is located near the polypeptide exit tunnel on the outside of the subunit, while an extended beta-hairpin is found that lines the wall of the exit tunnel in the center of the 70S ribosome. This chain is Large ribosomal subunit protein uL22, found in Metamycoplasma hominis (strain ATCC 23114 / DSM 25592 / NBRC 14850 / NCTC 10111 / PG21) (Mycoplasma hominis).